The primary structure comprises 233 residues: ATP synthase subunit a (233 aa).

A run of 5 helical transmembrane segments spans residues 29-49, 86-106, 118-135, 188-208, and 209-229; these read FKHVFYTWCAMAILFSLGLIV, VFPLLGGIFLFILFQNLLGLV, TNAAMALFVFGYYNYQGL, VLFFLMAPIVGTLPVYFLFLL, and GKVLQAFIFFMLTMVYLKGAF.

Belongs to the ATPase A chain family. F-type ATPases have 2 components, CF(1) - the catalytic core - and CF(0) - the membrane proton channel. CF(1) has five subunits: alpha(3), beta(3), gamma(1), delta(1), epsilon(1). CF(0) has three main subunits: a(1), b(2) and c(9-12). The alpha and beta chains form an alternating ring which encloses part of the gamma chain. CF(1) is attached to CF(0) by a central stalk formed by the gamma and epsilon chains, while a peripheral stalk is formed by the delta and b chains.

It is found in the cell inner membrane. Key component of the proton channel; it plays a direct role in the translocation of protons across the membrane. In Nitratidesulfovibrio vulgaris (strain ATCC 29579 / DSM 644 / CCUG 34227 / NCIMB 8303 / VKM B-1760 / Hildenborough) (Desulfovibrio vulgaris), this protein is ATP synthase subunit a.